The following is a 1170-amino-acid chain: Probable mRNA-capping enzyme (1170 aa).

Lysine 292 functions as the N6-GMP-lysine intermediate in the catalytic mechanism. The mRNA cap 0 methyltransferase domain maps to 684–1007 (SNAAGMRAFN…LNRYYVFRKT (324 aa)). Position 693 to 694 (693 to 694 (NN)) interacts with mRNA. Residues lysine 697, glycine 715, aspartate 737, and 813 to 815 (QFT) contribute to the S-adenosyl-L-methionine site.

In the N-terminal section; belongs to the dsDNA virus mRNA guanylyltransferase family. This sequence in the C-terminal section; belongs to the class I-like SAM-binding methyltransferase superfamily. mRNA cap 0 methyltransferase family.

Its subcellular location is the virion. It carries out the reaction a 5'-end triphospho-ribonucleoside in mRNA + H2O = a 5'-end diphospho-ribonucleoside in mRNA + phosphate + H(+). The catalysed reaction is a 5'-end diphospho-ribonucleoside in mRNA + GTP + H(+) = a 5'-end (5'-triphosphoguanosine)-ribonucleoside in mRNA + diphosphate. It catalyses the reaction a 5'-end (5'-triphosphoguanosine)-ribonucleoside in mRNA + S-adenosyl-L-methionine = a 5'-end (N(7)-methyl 5'-triphosphoguanosine)-ribonucleoside in mRNA + S-adenosyl-L-homocysteine. It functions in the pathway mRNA processing; mRNA capping. Its function is as follows. Responsible for methylating the 5'-cap structure of mRNAs. The sequence is that of Probable mRNA-capping enzyme from Acanthamoeba polyphaga mimivirus (APMV).